Reading from the N-terminus, the 253-residue chain is Ribonuclease HII (253 aa).

Residues 70 to 253 form the RNase H type-2 domain; that stretch reads PLVAGIDEVG…RSFSPVQNAL (184 aa). Positions 76, 77, and 168 each coordinate a divalent metal cation.

It belongs to the RNase HII family. The cofactor is Mn(2+). Mg(2+) is required as a cofactor.

The protein resides in the cytoplasm. The catalysed reaction is Endonucleolytic cleavage to 5'-phosphomonoester.. Endonuclease that specifically degrades the RNA of RNA-DNA hybrids. The chain is Ribonuclease HII from Latilactobacillus sakei subsp. sakei (strain 23K) (Lactobacillus sakei subsp. sakei).